The following is a 148-amino-acid chain: MADPARAGRLAQRIKVLVAEALRRGVKDDRVEPVTVTEVRVTNDLQHATVYYTVLGDEATVAAAHEGIQDNRGILRREVGRGLTIRLVPTLEFVADTVPEAAAHLEDVLRAAKERDAELAKAREGASYAGDADPYRTAEPDADDAPRA.

The tract at residues 120–148 (AKAREGASYAGDADPYRTAEPDADDAPRA) is disordered. A compositionally biased stretch (basic and acidic residues) spans 133-148 (DPYRTAEPDADDAPRA).

This sequence belongs to the RbfA family. Monomer. Binds 30S ribosomal subunits, but not 50S ribosomal subunits or 70S ribosomes.

The protein resides in the cytoplasm. One of several proteins that assist in the late maturation steps of the functional core of the 30S ribosomal subunit. Associates with free 30S ribosomal subunits (but not with 30S subunits that are part of 70S ribosomes or polysomes). Required for efficient processing of 16S rRNA. May interact with the 5'-terminal helix region of 16S rRNA. In Micrococcus luteus (strain ATCC 4698 / DSM 20030 / JCM 1464 / CCM 169 / CCUG 5858 / IAM 1056 / NBRC 3333 / NCIMB 9278 / NCTC 2665 / VKM Ac-2230) (Micrococcus lysodeikticus), this protein is Ribosome-binding factor A.